Reading from the N-terminus, the 541-residue chain is EH domain-containing protein 4 (541 aa).

An N-acetylmethionine modification is found at Met-1. The 232-residue stretch at 58-289 (FENKPMILLV…DLFRDIQSLP (232 aa)) folds into the Dynamin-type G domain. The segment at 68–75 (GQYSTGKT) is G1 motif. 68 to 75 (GQYSTGKT) serves as a coordination point for ATP. Positions 94–95 (EP) are G2 motif. Residues 156 to 159 (DSPG) are G3 motif. Position 162 is a phosphoserine (Ser-162). The G4 motif stretch occupies residues 222–225 (NKAD). Lys-223 is an ATP binding site. A region of interest (G5 motif) is located at residue Val-246. Trp-261 provides a ligand contact to ATP. Residues 447 to 535 (DKPVYDELFY…PHLVPPSHRK (89 aa)) form the EH domain. Tyr-451 bears the Phosphotyrosine mark. Ser-459 carries the post-translational modification Phosphoserine. One can recognise an EF-hand domain in the interval 479 to 514 (LPNSVLGKIWKLADCDCDGMLDEEEFALAKHLIKIK). Positions 492, 494, 496, 498, and 503 each coordinate Ca(2+).

It belongs to the TRAFAC class dynamin-like GTPase superfamily. Dynamin/Fzo/YdjA family. EHD subfamily. Homooligomer, and heterooligomer with EHD1, EHD2 and EHD3. Forms a complex with EHD4 and MICALL1; the complex controls CDH5 trafficking and coordinates angiogenesis. In terms of tissue distribution, highly expressed in pancreas and heart.

It localises to the early endosome membrane. Its subcellular location is the recycling endosome membrane. The protein localises to the cell membrane. The protein resides in the cell junction. It is found in the adherens junction. ATP- and membrane-binding protein that probably controls membrane reorganization/tubulation upon ATP hydrolysis. Plays a role in early endosomal transport. During sprouting angiogenesis, in complex with PACSIN2 and MICALL1, forms recycling endosome-like tubular structure at asymmetric adherens junctions to control CDH5 trafficking. The chain is EH domain-containing protein 4 from Homo sapiens (Human).